Reading from the N-terminus, the 308-residue chain is Palmitoyltransferase ZDHHC7 (308 aa).

Residues 1-50 lie on the Cytoplasmic side of the membrane; that stretch reads MQPSGHRLRDIEHHPLLTDNDNYDSASSSSSETDMADRVWFIRDGCGMVC. The chain crosses the membrane as a helical span at residues 51-71; sequence AVMTWLLVVYADFVVTFVMLL. Over 72-75 the chain is Lumenal; sequence PSKD. The chain crosses the membrane as a helical span at residues 76–96; that stretch reads FWYSVVNGVLFNCLAVLALSS. Residues 97–173 are Cytoplasmic-facing; the sequence is HLRTMLTDPG…NNCVGEKNQR (77 aa). Residues 130 to 180 enclose the DHHC domain; it reads YKCPKCCCIKPERAHHCSICKRCIRKMDHHCPWVNNCVGEKNQRFFVLFTM. Cysteine 160 acts as the S-palmitoyl cysteine intermediate in catalysis. A helical membrane pass occupies residues 174–194; sequence FFVLFTMYIALSSVHALILCG. Over 195 to 217 the chain is Lumenal; that stretch reads LQFISCVRGQWTECSDFSPPITV. Residues 218-238 form a helical membrane-spanning segment; it reads ILLVFLCLEGLLFFTFTAVMF. Residues 239–308 are Cytoplasmic-facing; sequence GTQIHSICND…TRKGGPEFSV (70 aa).

Belongs to the DHHC palmitoyltransferase family. Homooligomers. Heterooligomers with ZDHHC3. In terms of processing, autopalmitoylated. As to expression, ubiquitously expressed, with highest levels in liver, kidney and brain. Expressed in all brain regions.

Its subcellular location is the golgi apparatus membrane. It carries out the reaction L-cysteinyl-[protein] + hexadecanoyl-CoA = S-hexadecanoyl-L-cysteinyl-[protein] + CoA. It catalyses the reaction L-cysteinyl-[protein] + tetradecanoyl-CoA = S-tetradecanoyl-L-cysteinyl-[protein] + CoA. The enzyme catalyses L-cysteinyl-[protein] + octadecanoyl-CoA = S-octadecanoyl-L-cysteinyl-[protein] + CoA. Its function is as follows. Golgi-localized palmitoyltransferase that catalyzes the addition of palmitate onto various protein substrates and therefore functions in several unrelated biological processes. Has no stringent fatty acid selectivity and in addition to palmitate can also transfer onto target proteins myristate from tetradecanoyl-CoA and stearate from octadecanoyl-CoA. Palmitoylates sex steroid hormone receptors, including ESR1, PGR and AR, thereby regulating their targeting to the plasma membrane and their function in rapid intracellular signaling upon binding of sex hormones. Palmitoylates GNAQ, a heterotrimeric G protein, regulating its dynamic localization at the plasma membrane and is thereby involved in GNAQ-dependent G protein-coupled receptor signaling pathways. Also functions in ligand-induced cell death by regulating the FAS signaling pathway through the palmitoylation and stabilization of the receptor at the plasma membrane. In epithelial cells, palmitoylates SCRIB and regulates its localization to the plasma membrane, regulating indirectly cell polarity and differentiation. Also palmitoylates JAM3 and promotes its expression at tight junctions and regulates its function in cell migration. Palmitoylates the glucose transporter GLUT4/SLC2A4 and controls the insulin-dependent translocation of GLUT4 to the plasma membrane. In brain, could also palmitoylate SNAP25 and DLG4/PSD95. Could also palmitoylate DNAJC5 and regulate its localization to the Golgi membrane. Could also palmitoylate NCDN. May play a role in follicle stimulation hormone (FSH) activation of testicular Sertoli cells. Activates pyroptosis by catalyzing palmitoylation of gasdermin-D (GSDMD). The polypeptide is Palmitoyltransferase ZDHHC7 (Mus musculus (Mouse)).